Consider the following 923-residue polypeptide: Lysosomal acid alpha-glucosidase (923 aa).

The first 17 residues, 1-17 (MKHQVLLPLLVTTAIIA), serve as a signal peptide directing secretion. Residues 18–36 (GSVGVYTHSKPLLGQSQDQ) constitute a propeptide that is removed on maturation. N-linked (GlcNAc...) asparagine glycans are attached at residues asparagine 65, asparagine 405, and asparagine 440. The Nucleophile role is filled by aspartate 455. Residue glutamate 458 is part of the active site. The active-site Proton donor is the aspartate 585. Asparagine 586, asparagine 621, asparagine 646, asparagine 848, asparagine 908, and asparagine 912 each carry an N-linked (GlcNAc...) asparagine glycan.

The protein belongs to the glycosyl hydrolase 31 family.

Its subcellular location is the lysosome. It is found in the secreted. The catalysed reaction is Hydrolysis of terminal, non-reducing (1-&gt;4)-linked alpha-D-glucose residues with release of alpha-D-glucose.. In terms of biological role, essential for the degradation of glycogen to glucose in lysosomes. Has both alpha-1,4 and alpha-1,6-glucosidase activity. This Tetrahymena pyriformis protein is Lysosomal acid alpha-glucosidase.